Consider the following 951-residue polypeptide: Spliceosome associated factor 3, U4/U6 recycling protein (951 aa).

A disordered region spans residues 1 to 58 (MAATGNEEQTLLPDIEEEAEGMEREMESEDDEEEGMGVEHSEEEDEEDTSEDERENEA). The span at 14 to 56 (DIEEEAEGMEREMESEDDEEEGMGVEHSEEEDEEDTSEDEREN) shows a compositional bias: acidic residues. HAT repeat units lie at residues 88–120 (GKLH…DEIR), 126–157 (SDRE…YSIG), 163–199 (GGIE…FEIV), 222–255 (AQLE…WADD), 304–336 (GDPA…YLDR), 339–371 (KIKD…ALER), 374–410 (ADHQ…YLRR), and 467–500 (KNMQ…LERS). The tract at residues 517 to 941 (CTSDYPEHVC…LDTQTKSLSN (425 aa)) is necessary and sufficient for U6 snRNA binding. The stretch at 533-593 (ERVEGSLEDW…VKADKKAQKK (61 aa)) forms a coiled coil. The span at 567-581 (EALHARQEEEKAEQR) shows a compositional bias: basic and acidic residues. Residues 567–686 (EALHARQEEE…HDMPKEQRKD (120 aa)) form a disordered region. Over residues 582–596 (RKVKADKKAQKKGQK) the composition is skewed to basic residues. Residues 608-619 (DDDEEEWGEEAE) show a composition bias toward acidic residues. Over residues 674 to 686 (RQPHDMPKEQRKD) the composition is skewed to basic and acidic residues. 2 consecutive RRM domains span residues 688–766 (NCVF…PCVD) and 785–862 (HKIF…ISNP). The segment at 905-938 (RQSTPDAKAENGTISAPHATVTDGETSLDTQTKS) is disordered. The span at 927–938 (DGETSLDTQTKS) shows a compositional bias: polar residues.

It is found in the nucleus. The protein localises to the nucleoplasm. It localises to the cajal body. Its subcellular location is the nucleus speckle. The protein resides in the cytoplasm. Its function is as follows. U6 snRNP-binding protein that functions as a recycling factor of the splicing machinery. Promotes the initial reassembly of U4 and U6 snRNPs following their ejection from the spliceosome during its maturation. May also function as a substrate targeting factor for deubiquitinases and mediate the deubiquitination of components of the spliceosome and histones. The protein is Spliceosome associated factor 3, U4/U6 recycling protein of Danio rerio (Zebrafish).